We begin with the raw amino-acid sequence, 142 residues long: Peptidyl-prolyl cis-trans isomerase FKBP2 (142 aa).

A signal peptide spans 1–21; that stretch reads MRLSWFRVLTVLSICLSAVAT. In terms of domain architecture, PPIase FKBP-type spans 49–137; sequence GDVLHMHYTG…VFEVELLKIE (89 aa). The Prevents secretion from ER motif lies at 139 to 142; it reads RTEL.

The protein belongs to the FKBP-type PPIase family. FKBP2 subfamily. As to quaternary structure, interacts with ARFGEF1/BIG1 and the C-terminal of EPB41L2. In terms of tissue distribution, T-cells and thymus.

It localises to the endoplasmic reticulum membrane. The enzyme catalyses [protein]-peptidylproline (omega=180) = [protein]-peptidylproline (omega=0). Inhibited by both FK506 and rapamycin. Functionally, PPIases accelerate the folding of proteins. It catalyzes the cis-trans isomerization of proline imidic peptide bonds in oligopeptides. This Homo sapiens (Human) protein is Peptidyl-prolyl cis-trans isomerase FKBP2 (FKBP2).